The primary structure comprises 112 residues: Putative inner membrane protein YafU (112 aa).

The Cytoplasmic segment spans residues 1-21 (MSSERDLVNFLGDFSMDVAKA). A helical transmembrane segment spans residues 22-42 (VIAGGVATAIGSLASFACVSF). A topological domain (periplasmic) is located at residue G43. The helical transmembrane segment at 44–64 (FPVILVGGAILLTGIVCTVVL) threads the bilayer. The Cytoplasmic portion of the chain corresponds to 65–112 (NEIDAQCHLSEKLKYAIRDGLKRQQELDKWKRENMTPFMYVLNTPPVI).

Its subcellular location is the cell inner membrane. In Escherichia coli (strain K12), this protein is Putative inner membrane protein YafU (yafU).